The chain runs to 419 residues: Tyrosine--tRNA ligase (419 aa).

Position 36 (Y36) interacts with L-tyrosine. Positions 41 to 50 (PTGDSMHIGH) match the 'HIGH' region motif. L-tyrosine contacts are provided by Y168 and Q172. The short motif at 230–234 (KFGKT) is the 'KMSKS' region element. Position 233 (K233) interacts with ATP. Residues 352–419 (KNIVDFLVDA…KKKYFLARVK (68 aa)) form the S4 RNA-binding domain.

It belongs to the class-I aminoacyl-tRNA synthetase family. TyrS type 1 subfamily. In terms of assembly, homodimer.

The protein localises to the cytoplasm. It carries out the reaction tRNA(Tyr) + L-tyrosine + ATP = L-tyrosyl-tRNA(Tyr) + AMP + diphosphate + H(+). Catalyzes the attachment of tyrosine to tRNA(Tyr) in a two-step reaction: tyrosine is first activated by ATP to form Tyr-AMP and then transferred to the acceptor end of tRNA(Tyr). The sequence is that of Tyrosine--tRNA ligase from Latilactobacillus sakei subsp. sakei (strain 23K) (Lactobacillus sakei subsp. sakei).